A 638-amino-acid chain; its full sequence is 1-deoxy-D-xylulose-5-phosphate synthase (638 aa).

Thiamine diphosphate contacts are provided by residues histidine 75 and 116–118; that span reads AHS. Position 147 (aspartate 147) interacts with Mg(2+). Thiamine diphosphate-binding positions include 148–149, asparagine 177, tyrosine 288, and glutamate 370; that span reads GA. Residue asparagine 177 participates in Mg(2+) binding.

This sequence belongs to the transketolase family. DXPS subfamily. Homodimer. It depends on Mg(2+) as a cofactor. The cofactor is thiamine diphosphate.

The catalysed reaction is D-glyceraldehyde 3-phosphate + pyruvate + H(+) = 1-deoxy-D-xylulose 5-phosphate + CO2. It functions in the pathway metabolic intermediate biosynthesis; 1-deoxy-D-xylulose 5-phosphate biosynthesis; 1-deoxy-D-xylulose 5-phosphate from D-glyceraldehyde 3-phosphate and pyruvate: step 1/1. Its function is as follows. Catalyzes the acyloin condensation reaction between C atoms 2 and 3 of pyruvate and glyceraldehyde 3-phosphate to yield 1-deoxy-D-xylulose-5-phosphate (DXP). This is 1-deoxy-D-xylulose-5-phosphate synthase from Cupriavidus necator (strain ATCC 17699 / DSM 428 / KCTC 22496 / NCIMB 10442 / H16 / Stanier 337) (Ralstonia eutropha).